We begin with the raw amino-acid sequence, 275 residues long: 2,3,4,5-tetrahydropyridine-2,6-dicarboxylate N-succinyltransferase (275 aa).

Substrate is bound by residues Arg106 and Asp143.

It belongs to the transferase hexapeptide repeat family. As to quaternary structure, homotrimer.

The protein localises to the cytoplasm. It catalyses the reaction (S)-2,3,4,5-tetrahydrodipicolinate + succinyl-CoA + H2O = (S)-2-succinylamino-6-oxoheptanedioate + CoA. The protein operates within amino-acid biosynthesis; L-lysine biosynthesis via DAP pathway; LL-2,6-diaminopimelate from (S)-tetrahydrodipicolinate (succinylase route): step 1/3. This chain is 2,3,4,5-tetrahydropyridine-2,6-dicarboxylate N-succinyltransferase, found in Rickettsia bellii (strain RML369-C).